A 519-amino-acid polypeptide reads, in one-letter code: MDERPETELISIPATPRVSTPEILTPSGQRSPRPATKPSSATWTPTSFISPRFLSPIGTPMKRVLVNMKGYLEEVGHLTKLNPQDAWLPITESRNGNAHYAAFHNLNAGVGFQALVLPVAFAFLGWSWGILSLTIAYCWQLYTLWILVQLHEAVPGKRYNRYVELAQAAFGERLGVWLALFPTVYLSAGTATALILIGGETMKLFFQIVCGPLCTSNPLTTVEWYLVFTSLCIVLSQLPNLNSIAGLSLIGAVTAITYSTMVWVLSVSQPRPATISYEPLSMPSTSGSLFAVLNALGIIAFAFRGHNLVLEIQSTMPSTFKHPAHVPMWRGAKISYFLIALCIFPISIGGFWAYGNLMPSGGMLAALYAFHIHDIPRGLLATAFLLVVFSCLSSFQIYSMPAFDSFEAGYTSRTNKPCSIWVRSGFRVFFGFVSFFIGVALPFLSSLAGLLGGLTLPVTFAYPCFMWVLIKKPAKYSFNWYFHWGLGWLGVAFSLAFSIGGIWSMVTNGLKLKFFKPPN.

The disordered stretch occupies residues 1-44 (MDERPETELISIPATPRVSTPEILTPSGQRSPRPATKPSSATWT). The Cytoplasmic portion of the chain corresponds to 1-114 (MDERPETELI…NLNAGVGFQA (114 aa)). Transmembrane regions (helical) follow at residues 115–135 (LVLPVAFAFLGWSWGILSLTI) and 136–156 (AYCWQLYTLWILVQLHEAVPG). Residues 157-176 (KRYNRYVELAQAAFGERLGV) lie on the Cytoplasmic side of the membrane. A helical transmembrane segment spans residues 177–197 (WLALFPTVYLSAGTATALILI). Residues 198-217 (GGETMKLFFQIVCGPLCTSN) lie on the Extracellular side of the membrane. The helical transmembrane segment at 218–238 (PLTTVEWYLVFTSLCIVLSQL) threads the bilayer. Topologically, residues 239–243 (PNLNS) are cytoplasmic. Residues 244 to 264 (IAGLSLIGAVTAITYSTMVWV) form a helical membrane-spanning segment. Over 265–282 (LSVSQPRPATISYEPLSM) the chain is Extracellular. The chain crosses the membrane as a helical span at residues 283–303 (PSTSGSLFAVLNALGIIAFAF). The Cytoplasmic segment spans residues 304 to 333 (RGHNLVLEIQSTMPSTFKHPAHVPMWRGAK). A helical transmembrane segment spans residues 334–354 (ISYFLIALCIFPISIGGFWAY). At 355–377 (GNLMPSGGMLAALYAFHIHDIPR) the chain is on the extracellular side. Residues 378–398 (GLLATAFLLVVFSCLSSFQIY) traverse the membrane as a helical segment. At 399-427 (SMPAFDSFEAGYTSRTNKPCSIWVRSGFR) the chain is on the cytoplasmic side. Residues 428 to 448 (VFFGFVSFFIGVALPFLSSLA) form a helical membrane-spanning segment. G449 is a topological domain (extracellular). Residues 450-470 (LLGGLTLPVTFAYPCFMWVLI) traverse the membrane as a helical segment. At 471–485 (KKPAKYSFNWYFHWG) the chain is on the cytoplasmic side. The helical transmembrane segment at 486–506 (LGWLGVAFSLAFSIGGIWSMV) threads the bilayer. Over 507 to 519 (TNGLKLKFFKPPN) the chain is Extracellular.

This sequence belongs to the amino acid/polyamine transporter 2 family. Amino acid/auxin permease (AAAP) (TC 2.A.18.2) subfamily.

Its subcellular location is the cell membrane. Its function is as follows. Amino acid transporter. The sequence is that of Lysine histidine transporter-like 8 (AATL1) from Arabidopsis thaliana (Mouse-ear cress).